Here is a 152-residue protein sequence, read N- to C-terminus: UPF0266 membrane protein PM0830 (152 aa).

The next 3 helical transmembrane spans lie at 1–21 (MMIINVLLCLGIFCFLLYAFY), 45–65 (KDALIFSLLIGIIIYQTYTNL), and 66–86 (SSATLYLLTALILLSVYAAFI).

It belongs to the UPF0266 family.

It is found in the cell inner membrane. The sequence is that of UPF0266 membrane protein PM0830 from Pasteurella multocida (strain Pm70).